Reading from the N-terminus, the 538-residue chain is uncharacterized protein (538 aa).

4 disordered regions span residues 20-71 (RLSA…GGAQ), 151-211 (LWAE…EHPK), 288-331 (MLQP…QQHK), and 458-482 (EFEK…LKNY). Residues 154 to 171 (ESEKSESKGTRRDFRSYD) show a composition bias toward basic and acidic residues.

This is an uncharacterized protein from Homo sapiens (Human).